A 631-amino-acid polypeptide reads, in one-letter code: tRNA uridine 5-carboxymethylaminomethyl modification enzyme MnmG (631 aa).

An FAD-binding site is contributed by 15–20 (GAGHAG). The segment at 214 to 233 (YSKTEEEPGDKEPRHFSFTS) is disordered. 276-290 (GPRYCPSIETKVVRF) contacts NAD(+).

This sequence belongs to the MnmG family. As to quaternary structure, homodimer. Heterotetramer of two MnmE and two MnmG subunits. FAD is required as a cofactor.

The protein resides in the cytoplasm. In terms of biological role, NAD-binding protein involved in the addition of a carboxymethylaminomethyl (cmnm) group at the wobble position (U34) of certain tRNAs, forming tRNA-cmnm(5)s(2)U34. This chain is tRNA uridine 5-carboxymethylaminomethyl modification enzyme MnmG, found in Lactobacillus delbrueckii subsp. bulgaricus (strain ATCC BAA-365 / Lb-18).